The sequence spans 586 residues: Phosphomethylpyrimidine synthase (586 aa).

Residues 1 to 58 (MKQSVSAEQIELKSSLPGSKKVYVDGTREGMKVPMREIEQSDTNGVQNPPIRVYDTSG) are disordered. Positions 22-39 (VYVDGTREGMKVPMREIE) are enriched in basic and acidic residues. Residues Asn-193, Met-222, Tyr-251, His-287, 307-309 (SRG), 348-351 (DGLR), and Glu-387 each bind substrate. His-391 contributes to the Zn(2+) binding site. Position 414 (Tyr-414) interacts with substrate. His-455 contacts Zn(2+). Residues Cys-535, Cys-538, and Cys-543 each contribute to the [4Fe-4S] cluster site.

The protein belongs to the ThiC family. Requires [4Fe-4S] cluster as cofactor.

The enzyme catalyses 5-amino-1-(5-phospho-beta-D-ribosyl)imidazole + S-adenosyl-L-methionine = 4-amino-2-methyl-5-(phosphooxymethyl)pyrimidine + CO + 5'-deoxyadenosine + formate + L-methionine + 3 H(+). It functions in the pathway cofactor biosynthesis; thiamine diphosphate biosynthesis. Catalyzes the synthesis of the hydroxymethylpyrimidine phosphate (HMP-P) moiety of thiamine from aminoimidazole ribotide (AIR) in a radical S-adenosyl-L-methionine (SAM)-dependent reaction. The sequence is that of Phosphomethylpyrimidine synthase from Bacillus mycoides (strain KBAB4) (Bacillus weihenstephanensis).